A 304-amino-acid chain; its full sequence is tRNA pseudouridine synthase B (304 aa).

The active-site Nucleophile is the Asp48.

This sequence belongs to the pseudouridine synthase TruB family. Type 1 subfamily.

It catalyses the reaction uridine(55) in tRNA = pseudouridine(55) in tRNA. Responsible for synthesis of pseudouridine from uracil-55 in the psi GC loop of transfer RNAs. In Pseudomonas aeruginosa (strain UCBPP-PA14), this protein is tRNA pseudouridine synthase B.